A 285-amino-acid polypeptide reads, in one-letter code: Bifunctional protein FolD (285 aa).

Residues 166-168 and I232 each bind NADP(+); that span reads GAS.

The protein belongs to the tetrahydrofolate dehydrogenase/cyclohydrolase family. As to quaternary structure, homodimer.

The catalysed reaction is (6R)-5,10-methylene-5,6,7,8-tetrahydrofolate + NADP(+) = (6R)-5,10-methenyltetrahydrofolate + NADPH. It catalyses the reaction (6R)-5,10-methenyltetrahydrofolate + H2O = (6R)-10-formyltetrahydrofolate + H(+). The protein operates within one-carbon metabolism; tetrahydrofolate interconversion. Catalyzes the oxidation of 5,10-methylenetetrahydrofolate to 5,10-methenyltetrahydrofolate and then the hydrolysis of 5,10-methenyltetrahydrofolate to 10-formyltetrahydrofolate. This chain is Bifunctional protein FolD, found in Pseudoalteromonas atlantica (strain T6c / ATCC BAA-1087).